A 235-amino-acid polypeptide reads, in one-letter code: Small ribosomal subunit protein uS3 (235 aa).

Residues Val39–Arg107 form the KH type-2 domain.

It belongs to the universal ribosomal protein uS3 family. As to quaternary structure, part of the 30S ribosomal subunit. Forms a tight complex with proteins S10 and S14.

Functionally, binds the lower part of the 30S subunit head. Binds mRNA in the 70S ribosome, positioning it for translation. The polypeptide is Small ribosomal subunit protein uS3 (Buchnera aphidicola subsp. Baizongia pistaciae (strain Bp)).